We begin with the raw amino-acid sequence, 161 residues long: Protein lin-52 (161 aa).

The disordered stretch occupies residues 137 to 161 (TGSASPRYLQPTPPKNVAEETTGSQ).

It belongs to the lin-52 family. As to quaternary structure, component of the DRM complex, at least composed of lin-9, lin-35, lin-37, lin-52, lin-53, lin-54- dpl-1 and efl-1. Interacts with zft-11; the interaction is required to suppress the activation of non-neuronal genes in neurons.

Its subcellular location is the nucleus. Its function is as follows. Synthetic multivulva class B (synMuvB) protein. SynMuvB proteins are required to repress the induction of vulval development by Ras signaling and probably act by forming the multiprotein DRM complex that represses transcription. In association with the zinc finger protein ztf-11, negatively regulates the expression of non-neuronal genes during neurogenesis. This is Protein lin-52 from Caenorhabditis elegans.